The sequence spans 338 residues: Phytanoyl-CoA dioxygenase, peroxisomal (338 aa).

A peroxisome-targeting transit peptide spans 1-30 (MDYTRAGARLQVLLGHLGRPSALQIVAHPV). An N6-succinyllysine mark is found at Lys-59 and Lys-108. Residues Lys-120, Met-157, 175–177 (HQD), and Trp-193 contribute to the 2-oxoglutarate site. Residues His-175 and Asp-177 each coordinate Fe cation. Residues Lys-231 and Lys-252 each carry the N6-succinyllysine modification. His-264 lines the Fe cation pocket. 2-oxoglutarate contacts are provided by Ser-266 and Arg-275.

Belongs to the PhyH family. As to quaternary structure, interacts specifically with FKBP52 and PHYHIP. The cofactor is Fe cation. It depends on L-ascorbate as a cofactor. ATP is required as a cofactor. Mg(2+) serves as cofactor.

Its subcellular location is the peroxisome. The catalysed reaction is phytanoyl-CoA + 2-oxoglutarate + O2 = 2-hydroxyphytanoyl-CoA + succinate + CO2. It catalyses the reaction 3-methylhexadecanoyl-CoA + 2-oxoglutarate + O2 = 2-hydroxy-3-methylhexadecanoyl-CoA + succinate + CO2. It carries out the reaction hexadecanoyl-CoA + 2-oxoglutarate + O2 = 2-hydroxyhexadecanoyl-CoA + succinate + CO2. The enzyme catalyses octanoyl-CoA + 2-oxoglutarate + O2 = 2-hydroxyoctanoyl-CoA + succinate + CO2. The catalysed reaction is decanoyl-CoA + 2-oxoglutarate + O2 = 2-hydroxydecanoyl-CoA + succinate + CO2. It catalyses the reaction 3-methylbutanoyl-CoA + 2-oxoglutarate + O2 = 2-hydroxy-3-methylbutanoyl-CoA + succinate + CO2. It carries out the reaction heptadecanoyl-CoA + 2-oxoglutarate + O2 = 2-hydroxyheptadecanoyl-CoA + succinate + CO2. The enzyme catalyses eicosanoyl-CoA + 2-oxoglutarate + O2 = 2-hydroxyeicosanoyl-CoA + succinate + CO2. The catalysed reaction is octadecanoyl-CoA + 2-oxoglutarate + O2 = 2-hydroxyoctadecanoyl-CoA + succinate + CO2. It catalyses the reaction dodecanoyl-CoA + 2-oxoglutarate + O2 = 2-hydroxydodecanoyl-CoA + succinate + CO2. It carries out the reaction tetradecanoyl-CoA + 2-oxoglutarate + O2 = 2-hydroxytetradecanoyl-CoA + succinate + CO2. The enzyme catalyses hexanoyl-CoA + 2-oxoglutarate + O2 = 2-hydroxyhexanoyl-CoA + succinate + CO2. The catalysed reaction is butanoyl-CoA + 2-oxoglutarate + O2 = 2-hydroxybutanoyl-CoA + succinate + CO2. It catalyses the reaction 3-methylnonanoyl-CoA + 2-oxoglutarate + O2 = 2-hydroxy-3-methylnonanoyl-CoA + succinate + CO2. It carries out the reaction 3-methylundecanoyl-CoA + 2-oxoglutarate + O2 = 2-hydroxy-3-methylundecanoyl-CoA + succinate + CO2. The enzyme catalyses 3-methyldodecanoyl-CoA + 2-oxoglutarate + O2 = 2-hydroxy-3-methyldodecanoyl-CoA + succinate + CO2. The protein operates within lipid metabolism; fatty acid metabolism. Its function is as follows. Catalyzes the 2-hydroxylation of racemic phytanoyl-CoA and the isomers of 3-methylhexadecanoyl-CoA. Shows activity also towards a variety of other mono-branched 3-methylacyl-CoA esters (with a chain length of at least seven carbon atoms) and straight-chain acyl-CoA esters (with a chain length longer than four carbon atoms). Does not hydroxylate long and very long straight chain acyl-CoAs or 2-methyl-and 4-methyl-branched acyl-CoAs. The polypeptide is Phytanoyl-CoA dioxygenase, peroxisomal (Phyh) (Rattus norvegicus (Rat)).